Reading from the N-terminus, the 230-residue chain is MPQMAPVMTIDGPSGAGKGTLCQLLAEKLGWHLLDSGAIYRVLALAALHHDVELDAEAALVPLAANLDVQFQVDAEQVKVVLEGEDVSRTIRTEEVGNAASKIAAFPRVREALLRRQRAFRQAPGLIADGRDMGTVVFPEAEVKIFLDASAEERAARRYKQLQDKGFDVNFERLLTEIRERDDRDRNRAVAPLKPAEDALVVDSTAMSIDEVLVTVLAYAEQQLGDVSTN.

An ATP-binding site is contributed by 12-20; that stretch reads GPSGAGKGT.

Belongs to the cytidylate kinase family. Type 1 subfamily.

It localises to the cytoplasm. The catalysed reaction is CMP + ATP = CDP + ADP. It carries out the reaction dCMP + ATP = dCDP + ADP. The polypeptide is Cytidylate kinase (Aeromonas hydrophila subsp. hydrophila (strain ATCC 7966 / DSM 30187 / BCRC 13018 / CCUG 14551 / JCM 1027 / KCTC 2358 / NCIMB 9240 / NCTC 8049)).